The primary structure comprises 386 residues: O-phospho-L-seryl-tRNA:Cys-tRNA synthase (386 aa).

Residues 89–90, Asn196, and 219–221 each bind pyridoxal 5'-phosphate; these read AR and SGH. Lys222 bears the N6-(pyridoxal phosphate)lysine mark.

The protein belongs to the SepCysS family. As to quaternary structure, homodimer. Interacts with SepRS. The cofactor is pyridoxal 5'-phosphate.

The catalysed reaction is O-phospho-L-seryl-tRNA(Cys) + hydrogen sulfide + H(+) = L-cysteinyl-tRNA(Cys) + phosphate. Converts O-phospho-L-seryl-tRNA(Cys) (Sep-tRNA(Cys)) to L-cysteinyl-tRNA(Cys) (Cys-tRNA(Cys)). This chain is O-phospho-L-seryl-tRNA:Cys-tRNA synthase, found in Methanosarcina mazei (strain ATCC BAA-159 / DSM 3647 / Goe1 / Go1 / JCM 11833 / OCM 88) (Methanosarcina frisia).